Reading from the N-terminus, the 186-residue chain is Zein-alpha PZ19.1 (186 aa).

Residues 1-21 form the signal peptide; the sequence is MAAKIFCLIMLLGLSASAATA.

Belongs to the zein family.

In terms of biological role, zeins are major seed storage proteins. This Zea mays (Maize) protein is Zein-alpha PZ19.1.